Here is a 368-residue protein sequence, read N- to C-terminus: Protein mab-21-like 3 (368 aa).

The protein belongs to the mab-21 family.

The chain is Protein mab-21-like 3 (mab21L3) from Xenopus laevis (African clawed frog).